Here is a 227-residue protein sequence, read N- to C-terminus: Cytochrome c oxidase subunit 2 (227 aa).

The Mitochondrial intermembrane segment spans residues 1–14 (MAYPFQLGLQDATS). Residues 15–45 (PIMEELLHFHDHTLMIVFLISSLVLYIISLM) traverse the membrane as a helical segment. Residues 46 to 59 (LTTKLTHTSTMDAQ) lie on the Mitochondrial matrix side of the membrane. The helical transmembrane segment at 60–87 (EVETVWTILPAIILILIALPSLRILYMM) threads the bilayer. At 88–227 (DEINNPSLTV…YFETWSALMV (140 aa)) the chain is on the mitochondrial intermembrane side. Cu cation-binding residues include His161, Cys196, Glu198, Cys200, His204, and Met207. Residue Glu198 coordinates Mg(2+). Tyr218 carries the post-translational modification Phosphotyrosine.

The protein belongs to the cytochrome c oxidase subunit 2 family. As to quaternary structure, component of the cytochrome c oxidase (complex IV, CIV), a multisubunit enzyme composed of 14 subunits. The complex is composed of a catalytic core of 3 subunits MT-CO1, MT-CO2 and MT-CO3, encoded in the mitochondrial DNA, and 11 supernumerary subunits COX4I, COX5A, COX5B, COX6A, COX6B, COX6C, COX7A, COX7B, COX7C, COX8 and NDUFA4, which are encoded in the nuclear genome. The complex exists as a monomer or a dimer and forms supercomplexes (SCs) in the inner mitochondrial membrane with NADH-ubiquinone oxidoreductase (complex I, CI) and ubiquinol-cytochrome c oxidoreductase (cytochrome b-c1 complex, complex III, CIII), resulting in different assemblies (supercomplex SCI(1)III(2)IV(1) and megacomplex MCI(2)III(2)IV(2)). Found in a complex with TMEM177, COA6, COX18, COX20, SCO1 and SCO2. Interacts with TMEM177 in a COX20-dependent manner. Interacts with COX20. Interacts with COX16. It depends on Cu cation as a cofactor.

Its subcellular location is the mitochondrion inner membrane. It catalyses the reaction 4 Fe(II)-[cytochrome c] + O2 + 8 H(+)(in) = 4 Fe(III)-[cytochrome c] + 2 H2O + 4 H(+)(out). Functionally, component of the cytochrome c oxidase, the last enzyme in the mitochondrial electron transport chain which drives oxidative phosphorylation. The respiratory chain contains 3 multisubunit complexes succinate dehydrogenase (complex II, CII), ubiquinol-cytochrome c oxidoreductase (cytochrome b-c1 complex, complex III, CIII) and cytochrome c oxidase (complex IV, CIV), that cooperate to transfer electrons derived from NADH and succinate to molecular oxygen, creating an electrochemical gradient over the inner membrane that drives transmembrane transport and the ATP synthase. Cytochrome c oxidase is the component of the respiratory chain that catalyzes the reduction of oxygen to water. Electrons originating from reduced cytochrome c in the intermembrane space (IMS) are transferred via the dinuclear copper A center (CU(A)) of subunit 2 and heme A of subunit 1 to the active site in subunit 1, a binuclear center (BNC) formed by heme A3 and copper B (CU(B)). The BNC reduces molecular oxygen to 2 water molecules using 4 electrons from cytochrome c in the IMS and 4 protons from the mitochondrial matrix. The polypeptide is Cytochrome c oxidase subunit 2 (MT-CO2) (Canis lupus familiaris (Dog)).